Here is a 1707-residue protein sequence, read N- to C-terminus: Mediator of DNA damage checkpoint protein 1 (1707 aa).

A disordered region spans residues 1-23 (MESTQVIDWDAEEEEETELSSGS). The interaction with CHEK2 stretch occupies residues 1 to 150 (MESTQVIDWD…PRSLLTIEKT (150 aa)). Residues 2–222 (ESTQVIDWDA…SSPFGLGSDT (221 aa)) form an interaction with the MRN complex region. Position 4 is a phosphothreonine (threonine 4). The segment covering 9–18 (WDAEEEEETE) has biased composition (acidic residues). An FHA domain is found at 54-105 (NVVGRSPDCSVALPFPSISKQHAVIEISAWNKAPILQDCGSLNGTQIVKPPR). Threonine 146 bears the Phosphothreonine mark. The segment at 166 to 328 (ADSEEEGDFP…EERIPVTPPV (163 aa)) is disordered. Residues serine 168 and serine 176 each carry the phosphoserine modification. Residues 183–192 (GQRNTASPSA) show a composition bias toward polar residues. Residues serine 198 and serine 220 each carry the phosphoserine modification. Phosphothreonine is present on threonine 222. Positions 252–263 (ANGTTAGIQAQP) are enriched in polar residues. The span at 264–278 (TEHKLKDTKVKKEAG) shows a compositional bias: basic and acidic residues. Serine 298 bears the Phosphoserine mark. Threonine 300 bears the Phosphothreonine mark. At serine 313 the chain carries Phosphoserine. Threonine 315 carries the post-translational modification Phosphothreonine. At serine 360 the chain carries Phosphoserine. Threonine 362 is modified (phosphothreonine). The span at 369-378 (ALDVPLERNH) shows a compositional bias: basic and acidic residues. The disordered stretch occupies residues 369–398 (ALDVPLERNHTPMVINSDTDEEEEEEEEVS). Phosphoserine is present on serine 385. Over residues 386 to 397 (DTDEEEEEEEEV) the composition is skewed to acidic residues. Threonine 387 is modified (phosphothreonine). A phosphoserine mark is found at serine 398, serine 415, serine 425, serine 438, and serine 442. Disordered stretches follow at residues 417–497 (DPGA…PGSH), 520–642 (PGPS…AKEC), 679–699 (LFPC…QTPG), and 718–746 (REQS…HQHL). Over residues 425 to 439 (SQPQVLVEQSQSASG) the composition is skewed to polar residues. At threonine 444 the chain carries Phosphothreonine. Serine 461 carries the phosphoserine modification. Residue threonine 470 is modified to Phosphothreonine. 5 positions are modified to phosphoserine: serine 492, serine 493, serine 591, serine 593, and serine 595. Over residues 580–595 (VSEQESTLEVRSQSGS) the composition is skewed to polar residues. Residues 626-642 (GREREAHVGRTKSAKEC) are compositionally biased toward basic and acidic residues. The segment covering 719–730 (EQSETSELHEAH) has biased composition (basic and acidic residues). Phosphoserine is present on residues serine 735 and serine 750. At lysine 769 the chain carries N6-acetyllysine. Composition is skewed to basic and acidic residues over residues 778-804 (ADRM…RDVI), 812-868 (TKDR…REWE), and 875-889 (TPDR…HDQK). 2 disordered regions span residues 778-899 (ADRM…TLKP) and 914-1510 (IITG…QETA). Phosphoserine occurs at positions 885, 929, and 962. Over residues 968 to 986 (STQSLLTSQSQKQSTPQPL) the composition is skewed to low complexity. The residue at position 991 (serine 991) is a Phosphoserine. Composition is skewed to polar residues over residues 1026 to 1056 (PNTT…STRT), 1068 to 1086 (QPST…SQVT), and 1101 to 1113 (EIQS…QSVT). At threonine 1056 the chain carries Phosphothreonine. Phosphoserine is present on residues serine 1104, serine 1126, and serine 1128. Threonine 1132, threonine 1173, and threonine 1234 each carry phosphothreonine. Composition is skewed to polar residues over residues 1225-1241 (PLTS…TSRA), 1265-1281 (PSTS…SSQA), 1295-1308 (VPTT…TSKK), and 1317-1326 (LVTQGRTYKP). Phosphothreonine is present on residues threonine 1297 and threonine 1298. The residue at position 1327 (serine 1327) is a Phosphoserine. Positions 1343 to 1363 (PSTSTDHLVTPKVTDQSLTLQ) are enriched in polar residues. Threonine 1352 bears the Phosphothreonine mark. Serine 1359 carries the post-translational modification Phosphoserine. Over residues 1364–1376 (SSPLSASPVSSTP) the composition is skewed to low complexity. A Phosphothreonine modification is found at threonine 1375. Positions 1378-1393 (LKPPVPIAQPVTPEPI) are enriched in pro residues. Lysine 1418 is covalently cross-linked (Glycyl lysine isopeptide (Lys-Gly) (interchain with G-Cter in SUMO2)). Residues 1421–1441 (SALSEPEPQSSASQSSGASEA) show a composition bias toward low complexity. Phosphoserine is present on residues serine 1435, serine 1436, serine 1439, and serine 1443. Residues 1459-1473 (VIKEEPVETEVKEEP) show a composition bias toward basic and acidic residues. Lysine 1461 participates in a covalent cross-link: Glycyl lysine isopeptide (Lys-Gly) (interchain with G-Cter in SUMO1); alternate. A Glycyl lysine isopeptide (Lys-Gly) (interchain with G-Cter in SUMO2); alternate cross-link involves residue lysine 1461. Threonine 1480 bears the Phosphothreonine mark. The span at 1481-1493 (PEKRKRDHAEEVT) shows a compositional bias: basic and acidic residues. Lysine 1496 carries the N6-acetyllysine modification. BRCT domains follow at residues 1510 to 1588 (APKV…DYLV) and 1609 to 1700 (RERR…FVLS).

Homodimer. Interacts with H2AX, which requires phosphorylation of H2AX on 'Ser-139'. Interacts with the MRN complex, composed of MRE11, RAD50, and NBN. Interacts with CHEK2, which requires ATM-mediated phosphorylation of 'Thr-68' within the FHA domain of CHEK2. Interacts constitutively with the BRCA1-BARD1 complex, SMC1A and TP53BP1. Interacts with ATM and FANCD2, and these interactions are reduced upon DNA damage. Also interacts with the PRKDC complex, composed of XRCC6/KU70, XRCC5/KU80 and PRKDC/XRCC7. This interaction may be required for PRKDC autophosphorylation, which is essential for DNA double strand break (DSB) repair. When phosphorylated by ATM, interacts with RNF8 (via FHA domain). Interacts with CEP164. When phosphorylated, interacts with APTX (via FHA-like domain). Interacts (when phosphorylated) with TOPBP1; promoting TOPBP1 localization to DNA damage sites during mitosis. Interacts (when phosphorylated) with NBN; promoting NBN and MRN complex localization to DNA damage sites. Phosphorylated upon exposure to ionizing radiation (IR), ultraviolet radiation (UV), and hydroxyurea (HU). Phosphorylation in response to IR requires ATM, NBN, and possibly CHEK2. Also phosphorylated during the G2/M phase of the cell cycle and during activation of the mitotic spindle checkpoint. Phosphorylation at Thr-4 by ATM stabilizes and enhances homodimerization via the FHA domain. Phosphorylated at Ser-168 and Ser-198 by CK2 in response to DNA damage during mitosis, promoting interaction with TOPBP1. Phosphorylated by CK2 in response to DNA damage, promoting interaction with NBN and recruitment of the MRN complex to DNA damage sites. Post-translationally, sumoylation at Lys-1461 by PIAS4 following DNA damage promotes ubiquitin-mediated degradation. In terms of processing, ubiquitinated by RNF4, leading to proteasomal degradation; undergoes 'Lys-48'-linked polyubiquitination.

The protein localises to the nucleus. It is found in the chromosome. Its function is as follows. Histone reader protein required for checkpoint-mediated cell cycle arrest in response to DNA damage within both the S phase and G2/M phases of the cell cycle. Specifically recognizes and binds histone H2AX phosphorylated at 'Ser-139', a marker of DNA damage, serving as a scaffold for the recruitment of DNA repair and signal transduction proteins to discrete foci of DNA damage sites. Also required for downstream events subsequent to the recruitment of these proteins. These include phosphorylation and activation of the ATM, CHEK1 and CHEK2 kinases, and stabilization of TP53/p53 and apoptosis. ATM and CHEK2 may also be activated independently by a parallel pathway mediated by TP53BP1. Required for chromosomal stability during mitosis by promoting recruitment of TOPBP1 to DNA double strand breaks (DSBs): TOPBP1 forms filamentous assemblies that bridge MDC1 and tether broken chromosomes during mitosis. Required for the repair of DSBs via homologous recombination by promoting recruitment of NBN component of the MRN complex to DSBs. The sequence is that of Mediator of DNA damage checkpoint protein 1 (Mdc1) from Mus musculus (Mouse).